A 130-amino-acid chain; its full sequence is Small ribosomal subunit protein uS8 (130 aa).

The protein belongs to the universal ribosomal protein uS8 family. Part of the 30S ribosomal subunit.

One of the primary rRNA binding proteins, it binds directly to 16S rRNA central domain where it helps coordinate assembly of the platform of the 30S subunit. The protein is Small ribosomal subunit protein uS8 of Thermococcus gammatolerans (strain DSM 15229 / JCM 11827 / EJ3).